The following is a 202-amino-acid chain: Cytochrome c oxidase assembly protein CtaG (202 aa).

Over 1–14 the chain is Cytoplasmic; that stretch reads MSENAGTPKKQGRN. A helical; Signal-anchor for type II membrane protein membrane pass occupies residues 15-37; the sequence is NGAVVMMCLSFVFGMGAMSYAAV. Residues 38 to 202 lie on the Periplasmic side of the membrane; it reads PLYRIFCQVT…GGAEKIEKKL (165 aa).

This sequence belongs to the COX11/CtaG family.

Its subcellular location is the cell inner membrane. In terms of biological role, exerts its effect at some terminal stage of cytochrome c oxidase synthesis, probably by being involved in the insertion of the copper B into subunit I. In Rhizobium johnstonii (strain DSM 114642 / LMG 32736 / 3841) (Rhizobium leguminosarum bv. viciae), this protein is Cytochrome c oxidase assembly protein CtaG.